A 380-amino-acid polypeptide reads, in one-letter code: Tomoregulin-1 (380 aa).

Residues 1–39 (MGAAAAEAPLRLPAAPPLAFCCYTSVLLLFAFSLPGSRA) form the signal peptide. The Extracellular segment spans residues 40-330 (SNQPPGGGGG…VPSRQKLTHV (291 aa)). Kazal-like domains are found at residues 98–145 (ACQF…PCYS) and 189–237 (VCNI…HCTD). 9 disulfide bridges follow: Cys99-Cys129, Cys103-Cys122, Cys111-Cys143, Cys190-Cys221, Cys194-Cys214, Cys203-Cys235, Cys275-Cys288, Cys283-Cys299, and Cys301-Cys310. The 41-residue stretch at 271-311 (NHMPCPENLNGYCIHGKCEFIYSTQKASCRCESGYTGQHCE) folds into the EGF-like domain. A helical membrane pass occupies residues 331-351 (LIAAIIGAVQIAIIVAIVMCI). Topologically, residues 352–380 (TRKCPKNNRGRRQKQNLGHFTSDTSSRMV) are cytoplasmic. The segment at 359–380 (NRGRRQKQNLGHFTSDTSSRMV) is disordered. Polar residues predominate over residues 366 to 380 (QNLGHFTSDTSSRMV).

It belongs to the tomoregulin family. May interact with ST14. In terms of tissue distribution, expressed predominantly in brain, and at lower levels in heart, placenta and skeletal muscle. Down-regulated in brain tumors as compared to control brain tissues.

The protein localises to the cell membrane. In terms of biological role, neuron-specific restriction factor that prevents herpes simplex virus 1 (HHV-1) infection in the brain by blocking viral entry. Also able to restrict herpes simplex virus 2 (HHV-2) infection, although to a lesser extent. Acts by preventing the association between the viral glycoprotein D (gD) and its cell surface receptor NECTIN1, thereby inhibiting fusion of the virus and the cell membrane. Also able to prevent the association between the viral glycoprotein B (gB) and MYH9/NMMHC-IIA and MYH10/NMMHC-IIB receptors. May be a tumor suppressor in brain cancers. This is Tomoregulin-1 from Homo sapiens (Human).